The sequence spans 206 residues: MHNIKVGTKNPFLSGRKRPPFEEVEAAIRTFLLWIGENPNREGLLDTPGRVAKAYRDLFTGYDESVEEILGTVFEEVSGYNEPVIMKDLSFYSHCEHHMIPIVGKAHIAYFPDEKIVGLSKIARVVNVFSRRLQTQEAMTAQIANALETHLKPRGVAVLIEAEHMCMTMRGVQKQGAKTITTSFHGSYEKDQVAQAHFMMIVRRSS.

Zn(2+) is bound by residues cysteine 95, histidine 98, and cysteine 166.

Belongs to the GTP cyclohydrolase I family. As to quaternary structure, toroid-shaped homodecamer, composed of two pentamers of five dimers.

It carries out the reaction GTP + H2O = 7,8-dihydroneopterin 3'-triphosphate + formate + H(+). Its pathway is cofactor biosynthesis; 7,8-dihydroneopterin triphosphate biosynthesis; 7,8-dihydroneopterin triphosphate from GTP: step 1/1. The chain is GTP cyclohydrolase 1 from Bartonella henselae (strain ATCC 49882 / DSM 28221 / CCUG 30454 / Houston 1) (Rochalimaea henselae).